Consider the following 264-residue polypeptide: Tritrans,polycis-undecaprenyl-diphosphate synthase (geranylgeranyl-diphosphate specific) (264 aa).

The active site involves Asp-43. Asp-43 provides a ligand contact to Mg(2+). Substrate is bound by residues 44–47 (GNRR), Trp-48, His-60, and 88–90 (STE). Asn-91 serves as the catalytic Proton acceptor. Substrate contacts are provided by residues Phe-92, Arg-94, Arg-213, and 219–221 (RIS). Glu-232 serves as a coordination point for Mg(2+).

The protein belongs to the UPP synthase family. As to quaternary structure, homodimer. Requires Mg(2+) as cofactor.

It carries out the reaction geranylgeranyl diphosphate + 7 isopentenyl diphosphate = tri-trans,hepta-cis-undecaprenyl diphosphate + 7 diphosphate. In terms of biological role, catalyzes the sequential condensation of isopentenyl diphosphate (IPP) with geranylgeranyl diphosphate (GGPP) to yield (2Z,6Z,10Z,14Z,18Z,22Z,26Z,30E,34E,38E)-undecaprenyl diphosphate (tritrans,heptacis-UPP). It is probably the precursor of glycosyl carrier lipids. This Pyrococcus abyssi (strain GE5 / Orsay) protein is Tritrans,polycis-undecaprenyl-diphosphate synthase (geranylgeranyl-diphosphate specific).